The chain runs to 152 residues: Regulatory protein RecX (152 aa).

It belongs to the RecX family.

It localises to the cytoplasm. Its function is as follows. Modulates RecA activity. This is Regulatory protein RecX from Chromobacterium violaceum (strain ATCC 12472 / DSM 30191 / JCM 1249 / CCUG 213 / NBRC 12614 / NCIMB 9131 / NCTC 9757 / MK).